The sequence spans 656 residues: uncharacterized protein (656 aa).

The segment at 623 to 656 is disordered; the sequence is EIDIPGTPASIDPEWSRPPGSITDDHVFDAPLHR. Over residues 645 to 656 the composition is skewed to basic and acidic residues; that stretch reads TDDHVFDAPLHR.

This is an uncharacterized protein from Mycobacterium tuberculosis (strain ATCC 25618 / H37Rv).